The chain runs to 121 residues: Type II secretion system protein I (121 aa).

The propeptide at 1 to 6 is leader sequence; sequence MRRQKG. M7 carries the post-translational modification N-methylmethionine. The chain crosses the membrane as a helical span at residues 7–27; it reads MTLVEVLVALSVFALAGIAVL.

This sequence belongs to the GSP I family. In terms of assembly, type II secretion is composed of four main components: the outer membrane complex, the inner membrane complex, the cytoplasmic secretion ATPase and the periplasm-spanning pseudopilus. Interacts with core component OutG. Cleaved by prepilin peptidase. In terms of processing, methylated by prepilin peptidase at the amino group of the N-terminal methionine once the leader sequence is cleaved by prepilin peptidase.

It is found in the cell inner membrane. Its function is as follows. Component of the type II secretion system required for the energy-dependent secretion of extracellular factors such as proteases and toxins from the periplasm. Part of the pseudopilus tip complex that is critical for the recognition and binding of secretion substrates. The polypeptide is Type II secretion system protein I (outI) (Pectobacterium carotovorum subsp. carotovorum (Erwinia carotovora subsp. carotovora)).